Here is a 230-residue protein sequence, read N- to C-terminus: Acyl-protein thioesterase 1 (230 aa).

Catalysis depends on charge relay system residues Ser-119, Asp-174, and His-208. Lys-224 is subject to N6-acetyllysine.

It belongs to the AB hydrolase superfamily. AB hydrolase 2 family. In terms of assembly, homodimer. In terms of tissue distribution, platelets.

Its subcellular location is the cytoplasm. The protein resides in the cell membrane. It localises to the nucleus membrane. The protein localises to the endoplasmic reticulum. It carries out the reaction S-hexadecanoyl-L-cysteinyl-[protein] + H2O = L-cysteinyl-[protein] + hexadecanoate + H(+). The catalysed reaction is 1-hexadecanoyl-sn-glycero-3-phosphocholine + H2O = sn-glycerol 3-phosphocholine + hexadecanoate + H(+). The enzyme catalyses a 1-(9Z-octadecenoyl)-2-acyl-sn-glycero-3-phosphocholine + H2O = a 2-acyl-sn-glycero-3-phosphocholine + (9Z)-octadecenoate + H(+). Inhibited by palmostatin-B, leading to impair depalmitoylating of Ras. Functionally, acts as an acyl-protein thioesterase. Hydrolyzes fatty acids from S-acylated cysteine residues in proteins such as trimeric G alpha proteins or HRAS. Acts as a palmitoyl thioesterase that catalyzes depalmitoylation of proteins, such as ADRB2, KCNMA1 and SQSTM1. Acts as a negative regulator of autophagy by mediating palmitoylation of SQSTM1, decreasing affinity between SQSTM1 and ATG8 proteins and recruitment of ubiquitinated cargo proteins to autophagosomes. Acts as a lysophospholipase and hydrolyzes lysophosphatidylcholine (lyso-PC). Also hydrolyzes lysophosphatidylethanolamine (lyso-PE), lysophosphatidylinositol (lyso-PI) and lysophosphatidylserine (lyso-PS). Has much higher thioesterase activity than lysophospholipase activity. Contributes to the production of lysophosphatidic acid (LPA) during blood coagulation by recognizing and cleaving plasma phospholipids to generate lysophospholipids which in turn act as substrates for ENPP2 to produce LPA. The protein is Acyl-protein thioesterase 1 (LYPLA1) of Homo sapiens (Human).